Here is a 279-residue protein sequence, read N- to C-terminus: 4-diphosphocytidyl-2-C-methyl-D-erythritol kinase (279 aa).

Lys-9 is an active-site residue. ATP is bound at residue 93 to 103; the sequence is PMGAGLGGGSS. Asp-135 is an active-site residue.

It belongs to the GHMP kinase family. IspE subfamily.

The catalysed reaction is 4-CDP-2-C-methyl-D-erythritol + ATP = 4-CDP-2-C-methyl-D-erythritol 2-phosphate + ADP + H(+). Its pathway is isoprenoid biosynthesis; isopentenyl diphosphate biosynthesis via DXP pathway; isopentenyl diphosphate from 1-deoxy-D-xylulose 5-phosphate: step 3/6. In terms of biological role, catalyzes the phosphorylation of the position 2 hydroxy group of 4-diphosphocytidyl-2C-methyl-D-erythritol. This is 4-diphosphocytidyl-2-C-methyl-D-erythritol kinase from Acinetobacter baylyi (strain ATCC 33305 / BD413 / ADP1).